The chain runs to 447 residues: ATP-dependent protease ATPase subunit HslU (447 aa).

ATP is bound by residues Ile-18, Gly-60–Glu-65, Asp-259, Glu-325, and Arg-397.

The protein belongs to the ClpX chaperone family. HslU subfamily. In terms of assembly, a double ring-shaped homohexamer of HslV is capped on each side by a ring-shaped HslU homohexamer. The assembly of the HslU/HslV complex is dependent on binding of ATP.

It localises to the cytoplasm. Functionally, ATPase subunit of a proteasome-like degradation complex; this subunit has chaperone activity. The binding of ATP and its subsequent hydrolysis by HslU are essential for unfolding of protein substrates subsequently hydrolyzed by HslV. HslU recognizes the N-terminal part of its protein substrates and unfolds these before they are guided to HslV for hydrolysis. This is ATP-dependent protease ATPase subunit HslU from Burkholderia pseudomallei (strain K96243).